Reading from the N-terminus, the 426-residue chain is 3-phosphoshikimate 1-carboxyvinyltransferase (426 aa).

Residues Lys22, Ser23, and Arg27 each contribute to the 3-phosphoshikimate site. Lys22 provides a ligand contact to phosphoenolpyruvate. 2 residues coordinate phosphoenolpyruvate: Gly96 and Arg124. 3-phosphoshikimate contacts are provided by Ser170, Ser171, Gln172, Ser198, Asp314, Asn337, and Lys341. Position 172 (Gln172) interacts with phosphoenolpyruvate. Asp314 acts as the Proton acceptor in catalysis. Phosphoenolpyruvate contacts are provided by Arg345, Arg387, and Lys412.

Belongs to the EPSP synthase family. As to quaternary structure, monomer.

The protein localises to the cytoplasm. It carries out the reaction 3-phosphoshikimate + phosphoenolpyruvate = 5-O-(1-carboxyvinyl)-3-phosphoshikimate + phosphate. It participates in metabolic intermediate biosynthesis; chorismate biosynthesis; chorismate from D-erythrose 4-phosphate and phosphoenolpyruvate: step 6/7. Catalyzes the transfer of the enolpyruvyl moiety of phosphoenolpyruvate (PEP) to the 5-hydroxyl of shikimate-3-phosphate (S3P) to produce enolpyruvyl shikimate-3-phosphate and inorganic phosphate. The protein is 3-phosphoshikimate 1-carboxyvinyltransferase of Aliivibrio fischeri (strain ATCC 700601 / ES114) (Vibrio fischeri).